A 327-amino-acid chain; its full sequence is Annexin A8 (327 aa).

Annexin repeat units lie at residues F21–Y92, P93–Q164, G177–K249, and N253–G324. Residues M266, G268, G270, and D310 each coordinate Ca(2+).

Belongs to the annexin family.

Functionally, this protein is an anticoagulant protein that acts as an indirect inhibitor of the thromboplastin-specific complex, which is involved in the blood coagulation cascade. This chain is Annexin A8, found in Homo sapiens (Human).